Consider the following 473-residue polypeptide: Probable dipeptidase (473 aa).

Cysteine 10 is an active-site residue.

The protein belongs to the peptidase C69 family.

The catalysed reaction is an L-aminoacyl-L-amino acid + H2O = 2 an L-alpha-amino acid. The polypeptide is Probable dipeptidase (Latilactobacillus sakei (Lactobacillus sakei)).